Reading from the N-terminus, the 617-residue chain is Probable Xaa-Pro aminopeptidase P (617 aa).

Mn(2+)-binding residues include Asp414, Asp425, Glu523, and Glu537.

The protein belongs to the peptidase M24B family. It depends on Mn(2+) as a cofactor.

It carries out the reaction Release of any N-terminal amino acid, including proline, that is linked to proline, even from a dipeptide or tripeptide.. In terms of biological role, catalyzes the removal of a penultimate prolyl residue from the N-termini of peptides. The chain is Probable Xaa-Pro aminopeptidase P (AMPP) from Blastomyces gilchristii (strain SLH14081) (Blastomyces dermatitidis).